Reading from the N-terminus, the 250-residue chain is Acetylglutamate kinase (250 aa).

Substrate contacts are provided by residues 41–42 (GG), Arg63, and Asn156.

This sequence belongs to the acetylglutamate kinase family. ArgB subfamily.

The protein localises to the cytoplasm. The catalysed reaction is N-acetyl-L-glutamate + ATP = N-acetyl-L-glutamyl 5-phosphate + ADP. It functions in the pathway amino-acid biosynthesis; L-arginine biosynthesis; N(2)-acetyl-L-ornithine from L-glutamate: step 2/4. Catalyzes the ATP-dependent phosphorylation of N-acetyl-L-glutamate. This is Acetylglutamate kinase from Listeria monocytogenes serotype 4b (strain F2365).